The following is a 188-amino-acid chain: Vascular endothelial growth factor A-A (188 aa).

A signal peptide spans 1 to 23; sequence MNLVVYLIQLFLAALLHLSAVKA. 3 disulfides stabilise this stretch: Cys49/Cys91, Cys80/Cys125, and Cys84/Cys127. Asn98 carries an N-linked (GlcNAc...) asparagine glycan.

The protein belongs to the PDGF/VEGF growth factor family. As to quaternary structure, homodimer; disulfide-linked. Isoform VEGF165 binds kdr and kdrl. As to expression, predominantly expressed in regions associated with active vascularization. From 15-16 hours post-fertilization (hpf), expressed in the anterior forebrain, the mesoderm underlying and lateral to the anterior hindbrain, the mesoderm underlying and lateral to the posterior hindbrain, and in the ventral medial portions of the somites. By 30-36 hpf, expression in the somites is decreased, while strong expression is observed in the region of the developing glomeruli and in the anterior portion of the pronephric ducts, the pharyngeal arches, and the brain. By 72 hpf, expression remains only in the pronephros region.

The protein localises to the secreted. Its function is as follows. Growth factor active in angiogenesis, vasculogenesis and endothelial cell growth. Induces endothelial cell proliferation, promotes cell migration, inhibits apoptosis, and induces permeabilization of blood vessels. Required for intersegmental vessel development in the tail during embryogenesis. Acts both upstream of kdr and tie1 to stimulate endothelial cell differentiation, and upstream of gata1 to stimulate hematopoietic cell differentiation. This chain is Vascular endothelial growth factor A-A (vegfaa), found in Danio rerio (Zebrafish).